A 318-amino-acid chain; its full sequence is NAD(P)H-dependent D-xylose reductase (318 aa).

Residue Y48 is the Proton donor of the active site. H110 is a substrate binding site. NAD(+) contacts are provided by residues 165 to 166 (SN), 214 to 223 (SNFGPLSFLE), and 270 to 280 (KSTFPNTLAVN).

The protein belongs to the aldo/keto reductase family.

It carries out the reaction xylitol + NAD(+) = D-xylose + NADH + H(+). The enzyme catalyses xylitol + NADP(+) = D-xylose + NADPH + H(+). It participates in carbohydrate metabolism; D-xylose degradation. Its function is as follows. Reduces D-xylose into xylitol. Has a preference for NADPH, but can also utilize NADH as cosubstrate. The chain is NAD(P)H-dependent D-xylose reductase (XYL1) from Pachysolen tannophilus (Yeast).